A 179-amino-acid chain; its full sequence is Sperm surface protein Sp17 (179 aa).

Basic and acidic residues predominate over residues 72–109 (HAFKDEPPEKSETQKIQPEKVAIEKETMPQETVKEKET). Disordered stretches follow at residues 72–138 (HAFK…EGLL) and 159–179 (TRKEYLKKRDSTDETADENNE). Over residues 116 to 135 (EPTEEPQKEEEEEEDEEDLE) the composition is skewed to acidic residues. The region spanning 143 to 172 (MQDAAVKIQAVFRGHKTRKEYLKKRDSTDE) is the IQ domain. The segment covering 161–170 (KEYLKKRDST) has biased composition (basic and acidic residues).

As to quaternary structure, homodimer. May interact with ROPN1. In terms of tissue distribution, testis- and sperm-specific.

It localises to the membrane. Its function is as follows. Sperm surface zona pellucida binding protein. Helps to bind spermatozoa to the zona pellucida with high affinity. Might function in binding zona pellucida and carbohydrates. This Monodelphis domestica (Gray short-tailed opossum) protein is Sperm surface protein Sp17 (SPA17).